Consider the following 623-residue polypeptide: Kelch-like protein diablo (623 aa).

The disordered stretch occupies residues 1 to 54 (MGDLPGSGSTAQPRDAAVTGTGGNSTAGGGSSVGSTAVDRPPSPARLSHTSEKH). A Phosphothreonine modification is found at Thr-19. Over residues 20–32 (GTGGNSTAGGGSS) the composition is skewed to gly residues. The BTB domain occupies 72–139 (CDVVLNVGGR…CYTAHIIVEE (68 aa)). The 103-residue stretch at 174–276 (CLGIRAFADT…SPKFLVGTVG (103 aa)) folds into the BACK domain. Kelch repeat units follow at residues 323–369 (VLFA…VLND), 371–417 (LYAV…VLDG), 418–464 (FLYA…VLGG), 466–511 (LYAI…VFNN), 513–558 (IYAV…VVNG), and 559–605 (QLYA…VMRA).

Its pathway is protein modification; protein ubiquitination. Functionally, probable substrate-specific adapter of an E3 ubiquitin-protein ligase complex which mediates the ubiquitination and subsequent proteasomal degradation of target proteins. May have a role in synapse differentiation and growth. This Drosophila melanogaster (Fruit fly) protein is Kelch-like protein diablo.